A 280-amino-acid polypeptide reads, in one-letter code: F-box only protein 27 (280 aa).

Positions 1–26 (MGAWASRGRAARVPAPEPESEPEEAL) are disordered. The 48-residue stretch at 25 to 72 (ALDLSQLPPELLLVVLSHVPPRTLLGRCRQVCRGWRALVDGQALWLLI) folds into the F-box domain. The region spanning 100-277 (PCPLGRFCAR…VTNSSVIVRV (178 aa)) is the FBA domain.

Part of a SCF (SKP1-cullin-F-box) protein ligase complex. Interacts with SKP1 and CUL1.

In terms of biological role, substrate-recognition component of the SCF (SKP1-CUL1-F-box protein)-type E3 ubiquitin ligase complex. Able to recognize and bind complex-type oligosaccharides. The polypeptide is F-box only protein 27 (FBXO27) (Macaca fascicularis (Crab-eating macaque)).